The chain runs to 268 residues: Aliphatic sulfonates import ATP-binding protein SsuB (268 aa).

In terms of domain architecture, ABC transporter spans 15 to 236 (LAVRNLQKTF…VRGSHRLAAL (222 aa)). 47–54 (GRSGCGKS) serves as a coordination point for ATP.

This sequence belongs to the ABC transporter superfamily. Aliphatic sulfonates importer (TC 3.A.1.17.2) family. As to quaternary structure, the complex is composed of two ATP-binding proteins (SsuB), two transmembrane proteins (SsuC) and a solute-binding protein (SsuA).

Its subcellular location is the cell inner membrane. The catalysed reaction is ATP + H2O + aliphatic sulfonate-[sulfonate-binding protein]Side 1 = ADP + phosphate + aliphatic sulfonateSide 2 + [sulfonate-binding protein]Side 1.. Its function is as follows. Part of the ABC transporter complex SsuABC involved in aliphatic sulfonates import. Responsible for energy coupling to the transport system. This Pseudomonas fluorescens (strain Pf0-1) protein is Aliphatic sulfonates import ATP-binding protein SsuB.